The following is a 208-amino-acid chain: Uracil phosphoribosyltransferase (208 aa).

5-phospho-alpha-D-ribose 1-diphosphate-binding positions include R78, R103, and 130 to 138; that span reads DPMLATGGT. Residues I193 and 198–200 each bind uracil; that span reads GDA. A 5-phospho-alpha-D-ribose 1-diphosphate-binding site is contributed by D199.

The protein belongs to the UPRTase family. Mg(2+) is required as a cofactor.

The catalysed reaction is UMP + diphosphate = 5-phospho-alpha-D-ribose 1-diphosphate + uracil. It participates in pyrimidine metabolism; UMP biosynthesis via salvage pathway; UMP from uracil: step 1/1. With respect to regulation, allosterically activated by GTP. In terms of biological role, catalyzes the conversion of uracil and 5-phospho-alpha-D-ribose 1-diphosphate (PRPP) to UMP and diphosphate. The protein is Uracil phosphoribosyltransferase of Solidesulfovibrio magneticus (strain ATCC 700980 / DSM 13731 / RS-1) (Desulfovibrio magneticus).